Consider the following 519-residue polypeptide: Methionine--tRNA ligase (519 aa).

Residues 11–21 (AYPNAAPHVGH) carry the 'HIGH' region motif. The short motif at 299-303 (KMSKS) is the 'KMSKS' region element. Position 302 (Lys-302) interacts with ATP. Positions 500–519 (LPPPTGVFPRYQPPQPPEGK) are disordered.

The protein belongs to the class-I aminoacyl-tRNA synthetase family. MetG type 2B subfamily. As to quaternary structure, monomer.

It localises to the cytoplasm. The catalysed reaction is tRNA(Met) + L-methionine + ATP = L-methionyl-tRNA(Met) + AMP + diphosphate. Its function is as follows. Is required not only for elongation of protein synthesis but also for the initiation of all mRNA translation through initiator tRNA(fMet) aminoacylation. This is Methionine--tRNA ligase from Mycobacterium tuberculosis (strain ATCC 25618 / H37Rv).